The chain runs to 328 residues: tRNA uridine(34) hydroxylase (328 aa).

In terms of domain architecture, Rhodanese spans 130 to 224 (LDEDTVVLDT…YGKDPEVQGE (95 aa)). The active-site Cysteine persulfide intermediate is the Cys184.

The protein belongs to the TrhO family.

The enzyme catalyses uridine(34) in tRNA + AH2 + O2 = 5-hydroxyuridine(34) in tRNA + A + H2O. Its function is as follows. Catalyzes oxygen-dependent 5-hydroxyuridine (ho5U) modification at position 34 in tRNAs. The chain is tRNA uridine(34) hydroxylase from Streptococcus sanguinis (strain SK36).